The chain runs to 186 residues: Potassium-transporting ATPase KdpC subunit (186 aa).

A helical membrane pass occupies residues 10–30; that stretch reads LTIITMVLCGFLFPLAITLIG.

It belongs to the KdpC family. In terms of assembly, the system is composed of three essential subunits: KdpA, KdpB and KdpC.

It localises to the cell membrane. Part of the high-affinity ATP-driven potassium transport (or Kdp) system, which catalyzes the hydrolysis of ATP coupled with the electrogenic transport of potassium into the cytoplasm. This subunit acts as a catalytic chaperone that increases the ATP-binding affinity of the ATP-hydrolyzing subunit KdpB by the formation of a transient KdpB/KdpC/ATP ternary complex. In Staphylococcus aureus (strain MRSA252), this protein is Potassium-transporting ATPase KdpC subunit.